The chain runs to 718 residues: K(+)-insensitive pyrophosphate-energized proton pump (718 aa).

The next 6 membrane-spanning stretches (helical) occupy residues 6 to 26 (AVLV…IWAI), 54 to 76 (LTRQ…WYLL), 81 to 103 (AIGF…HVSV), 112 to 132 (AASL…AITG), 133 to 153 (LLVA…LTVW), and 168 to 188 (VSLG…GGIF). Lys-190 lines the substrate pocket. Mg(2+)-binding residues include Asp-193, Asp-197, Asn-220, and Asp-223. 6 consecutive transmembrane segments (helical) span residues 240–260 (AVTV…SDIL), 265–285 (LYPL…TFFV), 300–320 (GLIA…TLTV), 335–355 (GTNL…IVVI), 385–405 (GLAV…GGII), and 413–433 (LFGT…IVAL). Position 441 (Asp-441) interacts with Mg(2+). 4 helical membrane passes run 472–492 (AVTK…LFAA), 524–544 (YVVA…GMAM), 593–613 (IIPS…VLLI), and 620–640 (AFAA…FVAI). Positions 650, 682, and 686 each coordinate Ca(2+). Lys-689 contributes to the substrate binding site. A helical transmembrane segment spans residues 695-715 (AVNPAIKITNIVALLLLAVLA).

This sequence belongs to the H(+)-translocating pyrophosphatase (TC 3.A.10) family. K(+)-insensitive subfamily. As to quaternary structure, homodimer. Mg(2+) is required as a cofactor.

The protein resides in the cell inner membrane. It catalyses the reaction diphosphate + H2O + H(+)(in) = 2 phosphate + 2 H(+)(out). In terms of biological role, proton pump that utilizes the energy of pyrophosphate hydrolysis as the driving force for proton movement across the membrane. Generates a proton motive force. This is K(+)-insensitive pyrophosphate-energized proton pump from Brucella anthropi (strain ATCC 49188 / DSM 6882 / CCUG 24695 / JCM 21032 / LMG 3331 / NBRC 15819 / NCTC 12168 / Alc 37) (Ochrobactrum anthropi).